Reading from the N-terminus, the 186-residue chain is Pyridoxal 5'-phosphate synthase subunit PdxT (186 aa).

46–48 lines the L-glutamine pocket; the sequence is GES. The active-site Nucleophile is cysteine 75. L-glutamine is bound by residues arginine 101 and 129–130; that span reads IR. Active-site charge relay system residues include histidine 165 and glutamate 167.

It belongs to the glutaminase PdxT/SNO family. In terms of assembly, in the presence of PdxS, forms a dodecamer of heterodimers. Only shows activity in the heterodimer.

It catalyses the reaction aldehydo-D-ribose 5-phosphate + D-glyceraldehyde 3-phosphate + L-glutamine = pyridoxal 5'-phosphate + L-glutamate + phosphate + 3 H2O + H(+). It carries out the reaction L-glutamine + H2O = L-glutamate + NH4(+). It functions in the pathway cofactor biosynthesis; pyridoxal 5'-phosphate biosynthesis. Catalyzes the hydrolysis of glutamine to glutamate and ammonia as part of the biosynthesis of pyridoxal 5'-phosphate. The resulting ammonia molecule is channeled to the active site of PdxS. The polypeptide is Pyridoxal 5'-phosphate synthase subunit PdxT (Staphylococcus aureus (strain Mu3 / ATCC 700698)).